Here is a 394-residue protein sequence, read N- to C-terminus: MSKEKFERTKPHVNVGTIGHVDHGKTTLTAAITTVLAKTYGGSARAFDQIDNAPEEKARGITINTSHVEYDTPSRHYAHVDCPGHADYVKNMITGAAQMDGAILVVAATDGPMPQTREHILLGRQVGVPFIIVFLNKCDMVDDEELLELVEMEVRELLSQYDFPGDDTPIIRGSALKALEGEAEWEAKIVELAGYLDSYIPEPERAIDKPFLLPIEDVFSISGRGTVVTGRVERGIVKVGEEVEIVGIKETAKSTCTGVEMFRKLLDEGRAGENVGVLLRGIKREEIERGQVLAKPGSIKPHTKFESEVYILSKDEGGRHTPFFKGYRPQFYFRTTDVTGTIELPEGVEMVMPGDNIQMVVTLIHPIAMDDGLRFAIREGGRTVGAGVVAKVIS.

The region spanning 10–204 (KPHVNVGTIG…YLDSYIPEPE (195 aa)) is the tr-type G domain. A G1 region spans residues 19-26 (GHVDHGKT). 19 to 26 (GHVDHGKT) contacts GTP. Position 26 (threonine 26) interacts with Mg(2+). Residues 60–64 (GITIN) are G2. The segment at 81 to 84 (DCPG) is G3. Residues 81 to 85 (DCPGH) and 136 to 139 (NKCD) contribute to the GTP site. The interval 136–139 (NKCD) is G4. The segment at 174–176 (SAL) is G5.

It belongs to the TRAFAC class translation factor GTPase superfamily. Classic translation factor GTPase family. EF-Tu/EF-1A subfamily. As to quaternary structure, monomer.

It localises to the cytoplasm. It carries out the reaction GTP + H2O = GDP + phosphate + H(+). In terms of biological role, GTP hydrolase that promotes the GTP-dependent binding of aminoacyl-tRNA to the A-site of ribosomes during protein biosynthesis. The polypeptide is Elongation factor Tu (Enterobacter sp. (strain 638)).